The following is a 361-amino-acid chain: S-adenosylmethionine:tRNA ribosyltransferase-isomerase (361 aa).

Belongs to the QueA family. As to quaternary structure, monomer.

The protein localises to the cytoplasm. It carries out the reaction 7-aminomethyl-7-carbaguanosine(34) in tRNA + S-adenosyl-L-methionine = epoxyqueuosine(34) in tRNA + adenine + L-methionine + 2 H(+). It participates in tRNA modification; tRNA-queuosine biosynthesis. In terms of biological role, transfers and isomerizes the ribose moiety from AdoMet to the 7-aminomethyl group of 7-deazaguanine (preQ1-tRNA) to give epoxyqueuosine (oQ-tRNA). This Rhizobium etli (strain ATCC 51251 / DSM 11541 / JCM 21823 / NBRC 15573 / CFN 42) protein is S-adenosylmethionine:tRNA ribosyltransferase-isomerase.